A 239-amino-acid polypeptide reads, in one-letter code: 1-(5-phosphoribosyl)-5-[(5-phosphoribosylamino)methylideneamino] imidazole-4-carboxamide isomerase (239 aa).

The active-site Proton acceptor is aspartate 9. Aspartate 131 functions as the Proton donor in the catalytic mechanism.

The protein belongs to the HisA/HisF family.

Its subcellular location is the cytoplasm. It carries out the reaction 1-(5-phospho-beta-D-ribosyl)-5-[(5-phospho-beta-D-ribosylamino)methylideneamino]imidazole-4-carboxamide = 5-[(5-phospho-1-deoxy-D-ribulos-1-ylimino)methylamino]-1-(5-phospho-beta-D-ribosyl)imidazole-4-carboxamide. The protein operates within amino-acid biosynthesis; L-histidine biosynthesis; L-histidine from 5-phospho-alpha-D-ribose 1-diphosphate: step 4/9. The protein is 1-(5-phosphoribosyl)-5-[(5-phosphoribosylamino)methylideneamino] imidazole-4-carboxamide isomerase of Phocaeicola vulgatus (strain ATCC 8482 / DSM 1447 / JCM 5826 / CCUG 4940 / NBRC 14291 / NCTC 11154) (Bacteroides vulgatus).